The chain runs to 562 residues: 63 kDa globulin-like protein (562 aa).

Positions 1-23 (MATRARATILLLLAAVLFAAAAA) are cleaved as a signal peptide. A compositionally biased stretch (basic and acidic residues) spans 63–88 (QQQQERRREHGGHDDDRRDRDRRGEG). A disordered region spans residues 63–103 (QQQQERRREHGGHDDDRRDRDRRGEGSSEEEDEGRERGSRR). Cupin type-1 domains are found at residues 106–264 (YVFG…EKLE) and 312–507 (FNIL…REVD). N350 is a glycosylation site (N-linked (GlcNAc...) asparagine). Disordered regions lie at residues 383–430 (PHLS…QVGQ) and 516–550 (SAFL…GDEA). Positions 390–408 (RGGESEERRRERGKGKWRE) are enriched in basic and acidic residues. Over residues 409–427 (EEEEEEEQQKGQEEEEEEQ) the composition is skewed to acidic residues.

This sequence belongs to the 7S seed storage protein family.

It localises to the secreted. In terms of biological role, seed storage protein. The chain is 63 kDa globulin-like protein from Oryza sativa subsp. japonica (Rice).